Here is a 393-residue protein sequence, read N- to C-terminus: Phosphoglycerate kinase (393 aa).

Residues 21–23, R37, 60–63, R119, and R152 contribute to the substrate site; these read DFN and HLGR. ATP is bound by residues K202, E323, and 349–352; that span reads GGDT.

It belongs to the phosphoglycerate kinase family. As to quaternary structure, monomer.

It localises to the cytoplasm. The enzyme catalyses (2R)-3-phosphoglycerate + ATP = (2R)-3-phospho-glyceroyl phosphate + ADP. The protein operates within carbohydrate degradation; glycolysis; pyruvate from D-glyceraldehyde 3-phosphate: step 2/5. The polypeptide is Phosphoglycerate kinase (Desulforudis audaxviator (strain MP104C)).